A 1178-amino-acid chain; its full sequence is F-box/WD repeat-containing protein A-like protein (1178 aa).

The region spanning 1–208 (MQYVNGMDIV…TLPNLIKYIK (208 aa)) is the START domain. Disordered stretches follow at residues 223–296 (KTPD…NLNE), 569–594 (SLIINSPPNSNNHENEKKRKFRDNGI), and 618–649 (SSSSSSTSSSLTFSPPQQLSSPTSSSSSSTFS). Composition is skewed to low complexity over residues 229–293 (NPNL…SNEN) and 571–580 (IINSPPNSNN). Positions 717–763 (CSLFDLLPYEMIQYIFTLMDATHLIRMSRTCKYFNRICLDDNIWRDL) constitute an F-box domain. Residues 804–841 (KKSNNSSPLSASSSSSSPSPPLLPPPPPPIPQLPDMLL) are disordered. Residues 809–820 (SSPLSASSSSSS) are compositionally biased toward low complexity. Residues 821 to 835 (PSPPLLPPPPPPIPQ) show a composition bias toward pro residues. WD repeat units follow at residues 886-923 (GHKGKISCLQMAPNQIFTGSKDKEFKSWNIATKQCEST), 925-979 (RCGA…IEKE), 981-1017 (RFLYVSNGFIFMKRDIYSYESNTVKLYDSETEQELQM), 1020-1059 (IENTKINHCKIGRFENFCMIACTDKTVKLWDIDSNKTELV), 1062-1100 (GHKGSVNCLDFLNDYQLITGSSDKTIRMWDIRNPSSAIH), 1104-1141 (SHSSKVKAISIYNNLRMCTGDEDSICLWNLEGSNEPNL), and 1146-1178 (NNLSPVECLSIDDETMLAGFSDGEVSYYDFNSK).

Its function is as follows. Substrate recognition component of a SCF (SKP1-CUL1-F-box protein) E3 ubiquitin-protein ligase complex which mediates the ubiquitination and subsequent proteasomal degradation of target proteins. The sequence is that of F-box/WD repeat-containing protein A-like protein from Dictyostelium discoideum (Social amoeba).